A 106-amino-acid polypeptide reads, in one-letter code: Large ribosomal subunit protein uL24 (106 aa).

This sequence belongs to the universal ribosomal protein uL24 family. In terms of assembly, part of the 50S ribosomal subunit.

One of two assembly initiator proteins, it binds directly to the 5'-end of the 23S rRNA, where it nucleates assembly of the 50S subunit. In terms of biological role, one of the proteins that surrounds the polypeptide exit tunnel on the outside of the subunit. The polypeptide is Large ribosomal subunit protein uL24 (Thermosipho africanus (strain TCF52B)).